A 462-amino-acid polypeptide reads, in one-letter code: Argininosuccinate lyase (462 aa).

The protein belongs to the lyase 1 family. Argininosuccinate lyase subfamily.

The protein localises to the cytoplasm. It catalyses the reaction 2-(N(omega)-L-arginino)succinate = fumarate + L-arginine. The protein operates within amino-acid biosynthesis; L-arginine biosynthesis; L-arginine from L-ornithine and carbamoyl phosphate: step 3/3. This Streptococcus agalactiae serotype III (strain NEM316) protein is Argininosuccinate lyase.